The following is a 291-amino-acid chain: MLTGSLVAIVTPMLEDGSVDFEALDRLVDFHIESGTSGIVAVGTTGESAALAVEEHLQVVAAVVKRAAGRIKVIAGAGANSTHEAIDLTRESRRLGADQVLSVVPYYNKPTQEGMYRHFRAIAESTDIPVILYNVPGRTVADMCNDTVLRLAEIPNIIGLKDATADLARCCDLVKRAPKDFALYTGDDATAMAFMLCGGHGVISVTANVAPRQMAELCRAAIAGDVQAARRINDPLQGLHKDLFCEANPIPVKWALERMGRIPAGIRLPLTRLSDAGQSKVEAALKAANLI.

T45 is a pyruvate binding site. Catalysis depends on Y133, which acts as the Proton donor/acceptor. K161 acts as the Schiff-base intermediate with substrate in catalysis. I203 serves as a coordination point for pyruvate.

This sequence belongs to the DapA family. In terms of assembly, homotetramer; dimer of dimers.

Its subcellular location is the cytoplasm. The catalysed reaction is L-aspartate 4-semialdehyde + pyruvate = (2S,4S)-4-hydroxy-2,3,4,5-tetrahydrodipicolinate + H2O + H(+). It participates in amino-acid biosynthesis; L-lysine biosynthesis via DAP pathway; (S)-tetrahydrodipicolinate from L-aspartate: step 3/4. Functionally, catalyzes the condensation of (S)-aspartate-beta-semialdehyde [(S)-ASA] and pyruvate to 4-hydroxy-tetrahydrodipicolinate (HTPA). The chain is 4-hydroxy-tetrahydrodipicolinate synthase from Laribacter hongkongensis (strain HLHK9).